A 208-amino-acid chain; its full sequence is dTTP/UTP pyrophosphatase (208 aa).

The interval 28–48 (DRIHPADIDETPQRAEHPRSL) is disordered. Aspartate 79 functions as the Proton acceptor in the catalytic mechanism.

The protein belongs to the Maf family. YhdE subfamily. The cofactor is a divalent metal cation.

It is found in the cytoplasm. The enzyme catalyses dTTP + H2O = dTMP + diphosphate + H(+). It catalyses the reaction UTP + H2O = UMP + diphosphate + H(+). Nucleoside triphosphate pyrophosphatase that hydrolyzes dTTP and UTP. May have a dual role in cell division arrest and in preventing the incorporation of modified nucleotides into cellular nucleic acids. This Brucella abortus (strain 2308) protein is dTTP/UTP pyrophosphatase.